The following is a 261-amino-acid chain: CD40 ligand (261 aa).

Over 1-22 the chain is Cytoplasmic; the sequence is MIETYNQPVPRSAATGPPVSMK. The helical; Signal-anchor for type II membrane protein transmembrane segment at 23 to 43 threads the bilayer; that stretch reads IFMYLLTVFLITQMIGSALFA. Topologically, residues 44–261 are extracellular; sequence VYLHRRLDKI…GFTSFGLLKL (218 aa). Residues 122–261 enclose the THD domain; it reads IAAHVISEAS…GFTSFGLLKL (140 aa). A disulfide bond links Cys178 and Cys218. Asn240 carries N-linked (GlcNAc...) asparagine glycosylation.

It belongs to the tumor necrosis factor family. As to quaternary structure, homotrimer. Interacts with CD28. CD40 ligand, soluble form: Exists as either a monomer or a homotrimer. Forms a ternary complex between CD40 and integrins for CD40-CD40LG signaling. The soluble form derives from the membrane form by proteolytic processing.

The protein localises to the cell membrane. It is found in the cell surface. The protein resides in the secreted. Its function is as follows. Cytokine that acts as a ligand to CD40/TNFRSF5. Costimulates T-cell proliferation and cytokine production. Its cross-linking on T-cells generates a costimulatory signal which enhances the production of IL4 and IL10 in conjunction with the TCR/CD3 ligation and CD28 costimulation. Induces the activation of NF-kappa-B. Induces the activation of kinases MAPK8 and PAK2 in T-cells. Mediates B-cell proliferation in the absence of co-stimulus as well as IgE production in the presence of IL4. Involved in immunoglobulin class switching. In terms of biological role, acts as a ligand for integrins, specifically ITGA5:ITGB1 and ITGAV:ITGB3; both integrins and the CD40 receptor are required for activation of CD40-CD40LG signaling, which have cell-type dependent effects, such as B-cell activation, NF-kappa-B signaling and anti-apoptotic signaling. The chain is CD40 ligand (CD40LG) from Callithrix jacchus (White-tufted-ear marmoset).